The following is a 280-amino-acid chain: S-methyl-5'-thioadenosine phosphorylase (280 aa).

Phosphate is bound by residues S18, 60 to 61 (RH), and 93 to 94 (TA). M196 contacts substrate. T197 contacts phosphate. 220 to 222 (DYD) serves as a coordination point for substrate.

The protein belongs to the PNP/MTAP phosphorylase family. MTAP subfamily. As to quaternary structure, homotrimer.

It is found in the cytoplasm. The protein localises to the nucleus. It carries out the reaction S-methyl-5'-thioadenosine + phosphate = 5-(methylsulfanyl)-alpha-D-ribose 1-phosphate + adenine. It participates in amino-acid biosynthesis; L-methionine biosynthesis via salvage pathway; S-methyl-5-thio-alpha-D-ribose 1-phosphate from S-methyl-5'-thioadenosine (phosphorylase route): step 1/1. Its function is as follows. Catalyzes the reversible phosphorylation of S-methyl-5'-thioadenosine (MTA) to adenine and 5-methylthioribose-1-phosphate. Involved in the breakdown of MTA, a major by-product of polyamine biosynthesis. Responsible for the first step in the methionine salvage pathway after MTA has been generated from S-adenosylmethionine. Has broad substrate specificity with 6-aminopurine nucleosides as preferred substrates. The polypeptide is S-methyl-5'-thioadenosine phosphorylase (Ciona intestinalis (Transparent sea squirt)).